Here is a 796-residue protein sequence, read N- to C-terminus: Protein translocase subunit SecA 2 (796 aa).

Residues Q84, 102–106, and D496 each bind ATP; that span reads GEGKT.

Belongs to the SecA family. As to quaternary structure, monomer and homodimer (Potential). Part of the accessory SecA2/SecY2 protein translocation apparatus required to export cell wall protein SraP.

Its subcellular location is the cell membrane. It localises to the cytoplasm. It catalyses the reaction ATP + H2O + cellular proteinSide 1 = ADP + phosphate + cellular proteinSide 2.. Part of the accessory SecA2/SecY2 system specifically required to export SraP, a serine-rich repeat cell wall protein encoded upstream in the same operon. This chain is Protein translocase subunit SecA 2, found in Staphylococcus aureus (strain NCTC 8325 / PS 47).